Here is a 421-residue protein sequence, read N- to C-terminus: Early growth response protein 2 (421 aa).

Low complexity predominate over residues 127 to 145 (CSSTSSSNASSGSPNLSCS). Disordered regions lie at residues 127 to 152 (CSST…PQSD), 179 to 200 (SPTA…ASDG), and 223 to 288 (SDRK…ERPY). Residues 236–247 (PLSTIRNFTLGG) are compositionally biased toward polar residues. C2H2-type zinc fingers lie at residues 288 to 312 (YPCP…IRIH), 318 to 340 (FQCR…IRTH), and 346 to 368 (FACD…TKIH).

It belongs to the EGR C2H2-type zinc-finger protein family.

Its subcellular location is the nucleus. Functionally, sequence-specific DNA-binding transcription factor. In Xenopus laevis (African clawed frog), this protein is Early growth response protein 2 (egr2).